A 79-amino-acid polypeptide reads, in one-letter code: uncharacterized protein (79 aa).

This is an uncharacterized protein from Escherichia coli (strain K12).